The chain runs to 357 residues: Peptide chain release factor 1 (357 aa).

Residue Gln-233 is modified to N5-methylglutamine.

This sequence belongs to the prokaryotic/mitochondrial release factor family. Post-translationally, methylated by PrmC. Methylation increases the termination efficiency of RF1.

It is found in the cytoplasm. Functionally, peptide chain release factor 1 directs the termination of translation in response to the peptide chain termination codons UAG and UAA. In Syntrophus aciditrophicus (strain SB), this protein is Peptide chain release factor 1.